The chain runs to 245 residues: Protein DEHYDRATION-INDUCED 19 homolog 4 (245 aa).

The protein belongs to the Di19 family.

This chain is Protein DEHYDRATION-INDUCED 19 homolog 4 (DI19-4), found in Oryza sativa subsp. japonica (Rice).